The following is a 389-amino-acid chain: Type II methyltransferase M2.BsuMI (389 aa).

The SAM-dependent MTase C5-type domain occupies 1–299 (MKVVSLFSGI…ENLSQPKGSI (299 aa)). The active site involves Cys-69.

The protein belongs to the class I-like SAM-binding methyltransferase superfamily. C5-methyltransferase family. As to quaternary structure, monomer. May form a complex with YdiP, also seems to be active alone.

It carries out the reaction a 2'-deoxycytidine in DNA + S-adenosyl-L-methionine = a 5-methyl-2'-deoxycytidine in DNA + S-adenosyl-L-homocysteine + H(+). Its activity is regulated as follows. Somewhat inhibited by MgCl(2) and spermidine, strongly inhibited by MnCl(2). In terms of biological role, a methylase, recognizes the double-stranded sequence 5'-YTCGAR-3', methylates C-3 on both strands, and protects the DNA from cleavage by the BsuMI endonuclease. This Bacillus subtilis (strain 168) protein is Type II methyltransferase M2.BsuMI (ydiP).